A 619-amino-acid chain; its full sequence is Dihydroxy-acid dehydratase (619 aa).

Asp-81 lines the Mg(2+) pocket. Cys-122 provides a ligand contact to [2Fe-2S] cluster. Mg(2+) is bound by residues Asp-123 and Lys-124. Lys-124 is subject to N6-carboxylysine. Residue Cys-201 coordinates [2Fe-2S] cluster. Mg(2+) is bound at residue Glu-496. Ser-522 functions as the Proton acceptor in the catalytic mechanism.

It belongs to the IlvD/Edd family. In terms of assembly, homodimer. It depends on [2Fe-2S] cluster as a cofactor. The cofactor is Mg(2+).

It catalyses the reaction (2R)-2,3-dihydroxy-3-methylbutanoate = 3-methyl-2-oxobutanoate + H2O. The enzyme catalyses (2R,3R)-2,3-dihydroxy-3-methylpentanoate = (S)-3-methyl-2-oxopentanoate + H2O. The protein operates within amino-acid biosynthesis; L-isoleucine biosynthesis; L-isoleucine from 2-oxobutanoate: step 3/4. Its pathway is amino-acid biosynthesis; L-valine biosynthesis; L-valine from pyruvate: step 3/4. In terms of biological role, functions in the biosynthesis of branched-chain amino acids. Catalyzes the dehydration of (2R,3R)-2,3-dihydroxy-3-methylpentanoate (2,3-dihydroxy-3-methylvalerate) into 2-oxo-3-methylpentanoate (2-oxo-3-methylvalerate) and of (2R)-2,3-dihydroxy-3-methylbutanoate (2,3-dihydroxyisovalerate) into 2-oxo-3-methylbutanoate (2-oxoisovalerate), the penultimate precursor to L-isoleucine and L-valine, respectively. This Paracidovorax citrulli (strain AAC00-1) (Acidovorax citrulli) protein is Dihydroxy-acid dehydratase.